A 444-amino-acid polypeptide reads, in one-letter code: Proline--tRNA ligase (444 aa).

It belongs to the class-II aminoacyl-tRNA synthetase family. ProS type 2 subfamily. As to quaternary structure, homodimer.

Its subcellular location is the cytoplasm. It carries out the reaction tRNA(Pro) + L-proline + ATP = L-prolyl-tRNA(Pro) + AMP + diphosphate. In terms of biological role, catalyzes the attachment of proline to tRNA(Pro) in a two-step reaction: proline is first activated by ATP to form Pro-AMP and then transferred to the acceptor end of tRNA(Pro). In Bradyrhizobium sp. (strain BTAi1 / ATCC BAA-1182), this protein is Proline--tRNA ligase.